Reading from the N-terminus, the 165-residue chain is 6,7-dimethyl-8-ribityllumazine synthase (165 aa).

Residues Phe22, 56–58 (SME), and 80–82 (AVI) contribute to the 5-amino-6-(D-ribitylamino)uracil site. Position 85 to 86 (85 to 86 (ET)) interacts with (2S)-2-hydroxy-3-oxobutyl phosphate. His88 acts as the Proton donor in catalysis. 5-amino-6-(D-ribitylamino)uracil is bound at residue Phe113. Arg127 contacts (2S)-2-hydroxy-3-oxobutyl phosphate.

It belongs to the DMRL synthase family.

It carries out the reaction (2S)-2-hydroxy-3-oxobutyl phosphate + 5-amino-6-(D-ribitylamino)uracil = 6,7-dimethyl-8-(1-D-ribityl)lumazine + phosphate + 2 H2O + H(+). It participates in cofactor biosynthesis; riboflavin biosynthesis; riboflavin from 2-hydroxy-3-oxobutyl phosphate and 5-amino-6-(D-ribitylamino)uracil: step 1/2. Functionally, catalyzes the formation of 6,7-dimethyl-8-ribityllumazine by condensation of 5-amino-6-(D-ribitylamino)uracil with 3,4-dihydroxy-2-butanone 4-phosphate. This is the penultimate step in the biosynthesis of riboflavin. This is 6,7-dimethyl-8-ribityllumazine synthase from Thermotoga petrophila (strain ATCC BAA-488 / DSM 13995 / JCM 10881 / RKU-1).